We begin with the raw amino-acid sequence, 150 residues long: Large ribosomal subunit protein bL9 (150 aa).

Belongs to the bacterial ribosomal protein bL9 family.

Functionally, binds to the 23S rRNA. The sequence is that of Large ribosomal subunit protein bL9 from Ralstonia nicotianae (strain ATCC BAA-1114 / GMI1000) (Ralstonia solanacearum).